A 268-amino-acid polypeptide reads, in one-letter code: L-aspartate dehydrogenase (268 aa).

2 residues coordinate NAD(+): Ala-125 and Asn-191. Residue His-221 is part of the active site.

The protein belongs to the L-aspartate dehydrogenase family.

It catalyses the reaction L-aspartate + NADP(+) + H2O = oxaloacetate + NH4(+) + NADPH + H(+). The enzyme catalyses L-aspartate + NAD(+) + H2O = oxaloacetate + NH4(+) + NADH + H(+). The protein operates within cofactor biosynthesis; NAD(+) biosynthesis; iminoaspartate from L-aspartate (dehydrogenase route): step 1/1. In terms of biological role, specifically catalyzes the NAD or NADP-dependent dehydrogenation of L-aspartate to iminoaspartate. The sequence is that of L-aspartate dehydrogenase from Ralstonia nicotianae (strain ATCC BAA-1114 / GMI1000) (Ralstonia solanacearum).